Consider the following 2715-residue polypeptide: G surface protein, allelic form 156 (2715 aa).

An N-terminal signal peptide occupies residues Met-1 to Tyr-20. 34 PSA repeats span residues Lys-111–Asp-171, Phe-177–Asp-237, Leu-243–Ala-303, Ile-309–Ala-366, Asn-372–Thr-404, Met-405–Val-467, Asn-473–Val-530, Thr-536–Ser-596, Phe-602–Ala-673, Gly-688–Ala-748, Gln-752–Ala-812, Tyr-820–Thr-895, Gly-934–Ala-1001, Gly-1008–Ala-1067, Gly-1073–Pro-1141, Gly-1147–Ala-1215, Gly-1221–Ala-1289, Gly-1295–Ala-1363, Gly-1369–Ala-1437, Gly-1443–Ser-1507, Gly-1513–Ala-1578, Thr-1586–Asp-1652, Thr-1693–Asp-1751, Arg-1759–Gly-1819, Tyr-1827–Thr-1898, Thr-1904–Ala-1976, Tyr-1984–Asp-2044, Phe-2080–Ser-2149, Leu-2155–Gln-2215, Gly-2219–Lys-2286, Trp-2290–Ala-2355, Tyr-2359–Ala-2430, Gly-2434–Ala-2500, and Gly-2505–Thr-2573.

The protein localises to the cell membrane. This protein is the surface antigen or immobilization antigen of Paramecium primaurelia. This Paramecium primaurelia protein is G surface protein, allelic form 156 (156G).